We begin with the raw amino-acid sequence, 232 residues long: Large ribosomal subunit protein uL1 (232 aa).

This sequence belongs to the universal ribosomal protein uL1 family. As to quaternary structure, part of the 50S ribosomal subunit.

Its function is as follows. Binds directly to 23S rRNA. The L1 stalk is quite mobile in the ribosome, and is involved in E site tRNA release. Functionally, protein L1 is also a translational repressor protein, it controls the translation of the L11 operon by binding to its mRNA. The protein is Large ribosomal subunit protein uL1 of Bacillus licheniformis (strain ATCC 14580 / DSM 13 / JCM 2505 / CCUG 7422 / NBRC 12200 / NCIMB 9375 / NCTC 10341 / NRRL NRS-1264 / Gibson 46).